The primary structure comprises 171 residues: S-ribosylhomocysteine lyase (171 aa).

Fe cation is bound by residues His54, His58, and Cys128.

It belongs to the LuxS family. As to quaternary structure, homodimer. It depends on Fe cation as a cofactor.

It catalyses the reaction S-(5-deoxy-D-ribos-5-yl)-L-homocysteine = (S)-4,5-dihydroxypentane-2,3-dione + L-homocysteine. Involved in the synthesis of autoinducer 2 (AI-2) which is secreted by bacteria and is used to communicate both the cell density and the metabolic potential of the environment. The regulation of gene expression in response to changes in cell density is called quorum sensing. Catalyzes the transformation of S-ribosylhomocysteine (RHC) to homocysteine (HC) and 4,5-dihydroxy-2,3-pentadione (DPD). The chain is S-ribosylhomocysteine lyase from Campylobacter curvus (strain 525.92).